Here is a 243-residue protein sequence, read N- to C-terminus: Small ribosomal subunit protein eS4 (243 aa).

The 63-residue stretch at 43–105 (IPLLYIVRDY…TGEHYRVLPN (63 aa)) folds into the S4 RNA-binding domain.

The protein belongs to the eukaryotic ribosomal protein eS4 family.

This Pyrococcus horikoshii (strain ATCC 700860 / DSM 12428 / JCM 9974 / NBRC 100139 / OT-3) protein is Small ribosomal subunit protein eS4 (rps4e).